We begin with the raw amino-acid sequence, 332 residues long: Phosphate acyltransferase (332 aa).

Belongs to the PlsX family. In terms of assembly, homodimer. Probably interacts with PlsY.

The protein localises to the cytoplasm. The enzyme catalyses a fatty acyl-[ACP] + phosphate = an acyl phosphate + holo-[ACP]. Its pathway is lipid metabolism; phospholipid metabolism. Catalyzes the reversible formation of acyl-phosphate (acyl-PO(4)) from acyl-[acyl-carrier-protein] (acyl-ACP). This enzyme utilizes acyl-ACP as fatty acyl donor, but not acyl-CoA. This Bacillus pumilus (strain SAFR-032) protein is Phosphate acyltransferase.